The following is a 901-amino-acid chain: Nuclear factor of activated T-cells, cytoplasmic 4 (901 aa).

Residues 1-11 are compositionally biased toward acidic residues; it reads MGAASCEDEEL. Disordered regions lie at residues 1–180 and 203–361; these read MGAA…SSWS and NEAA…TEDS. Residues 61–81 are compositionally biased toward pro residues; that stretch reads IPRPPPPRPGMHSPPPRPAPS. The segment covering 96 to 109 has biased composition (gly residues); sequence GGPGGTAGGTGGGR. A calcineurin-binding region spans residues 114-119; sequence PSIRIT. Positions 114–123 are enriched in low complexity; the sequence is PSIRITSISP. The span at 151–165 shows a compositional bias: gly residues; that stretch reads GFGGYREAGGQGGGA. Residues 166–180 are compositionally biased toward low complexity; it reads FFSPSPGSSSLSSWS. Ser-168, Ser-170, Ser-213, and Ser-217 each carry phosphoserine. Residues 213–229 form an SP 1 repeat; the sequence is SPLPSPRASPRPWTPED. Residues 213–293 are 2 approximate SP repeats; that stretch reads SPLPSPRASP…LSRRGSLGEE (81 aa). 2 stretches are compositionally biased toward pro residues: residues 215–227 and 254–263; these read LPSP…PWTP and GPIPASPRPA. Residues 268–270 carry the Nuclear localization signal motif; that stretch reads KRR. The segment covering 272–288 has biased composition (low complexity); the sequence is SSSGTPSSASPALSRRG. One copy of the SP 2; approximate repeat lies at 277–293; the sequence is PSSASPALSRRGSLGEE. Residues Ser-289, Ser-334, and Ser-344 each carry the phosphoserine modification. One can recognise an RHD domain in the interval 401–582; the sequence is SALPPLDWPL…VPIECSQRSA (182 aa). A DNA-binding region spans residues 430–437; sequence RAHYETEG. The IPT/TIG domain occupies 586–683; it reads PQVEAYSPSA…KRSPTQSFKF (98 aa). The Nuclear localization signal signature appears at 672-674; that stretch reads RRK. Lys-689 participates in a covalent cross-link: Glycyl lysine isopeptide (Lys-Gly) (interchain with G-Cter in SUMO2). Disordered stretches follow at residues 697–721 and 791–868; these read SLRG…PRPP and QYGG…GFRD. Over residues 805-822 the composition is skewed to pro residues; the sequence is FSPPAPFRPPLPSSPPLE.

As to quaternary structure, member of the multicomponent NFATC transcription complex that consists of at least two components, a pre-existing cytoplasmic component NFATC2 and an inducible nuclear component NFATC1. Other NFAT proteins, such as NFATC4, NFATC3, or members of the activating protein-1 (AP-1) family and MAF can also bind the complex. NFAT proteins can bind DNA as monomers or dimers. Component of a promoter-binding complex composed of STAT3, NFATC3 and NFATC4; complex formation is enhanced by calcineurin. Interacts with CREBBP; this interaction potentiates transcription activation. Interacts with MAPK8/JNK1 and MAPK9/JNK2. Interacts with GATA4 (via the second Zn finger). Interacts (via N-terminus) with IRAK1 (via C-terminus). Interacts with RPS6KA3. Interacts with HOMER1, HOMER2 and HOMER3; this interaction competes with calcineurin/PPP3CA-binding and hence prevents NFATC4 dephosphorylation and activation. Interacts with ESR1 and ESR2; this interaction decreases NFATC4 transcriptional activity. Interacts with MTOR and MAPK7/ERK5. Interacts with TRIM17; this interaction prevents NFATC3 nuclear localization. Interacts with TCF25 (via C-terminus); the interaction leads to suppression of NFATC4 transcription factor activity and is reduced following stimulation with angiotensin-2. In terms of processing, phosphorylated by NFATC-kinases; dephosphorylated by calcineurin/PPP3CA. Phosphorylated on Ser-168 and Ser-170 by MTOR, IRAK1, MAPK7/ERK5 and MAPK14/p38, on Ser-213 and Ser-217 by MAPK8 and MAPK9, and on Ser-289 and Ser-344 by RPS6KA3. Phosphorylated by GSK3B; this phosphorylation markedly increases NFATC4 ubiquitination. Phosphorylation by MAPK8/JNK1, MAPK9/JNK2 and RPS6KA3 may stimulate NFATC4 transcriptional activity. Phosphorylation at Ser-168 and Ser-170 is stimulated by UV irradiation. Ubiquitinated, leading to degradation by the proteasome. Ubiquitination may be stimulated by GSK3B-dependent phosphorylation. Polyubiquitin linkage mainly occurs through 'Lys-48'. As to expression, expressed in heart (at protein level).

The protein localises to the cytoplasm. The protein resides in the nucleus. In terms of biological role, ca(2+)-regulated transcription factor that is involved in several processes, including the development and function of the immune, cardiovascular, musculoskeletal, and nervous systems. Involved in T-cell activation, stimulating the transcription of cytokine genes, including that of IL2 and IL4. Along with NFATC3, involved in embryonic heart development. Following JAK/STAT signaling activation and as part of a complex with NFATC3 and STAT3, binds to the alpha-beta E4 promoter region of CRYAB and activates transcription in cardiomyocytes. Involved in mitochondrial energy metabolism required for cardiac morphogenesis and function. Transactivates many genes involved in heart physiology. Along with GATA4, binds to and activates NPPB/BNP promoter. Activates NPPA/ANP/ANF and MYH7/beta-MHC transcription. Binds to and transactivates AGTR2 gene promoter. Involved in the regulation of adult hippocampal neurogenesis. Involved in BDNF-driven pro-survival signaling in hippocampal adult-born neurons. Involved in the formation of long-term spatial memory and long-term potentiation. In cochlear nucleus neurons, may play a role in deafferentation-induced apoptosis during a developmental critical period when auditory neurons depend on afferent input for survival. Binds to and activates the BACE1/Beta-secretase 1 promoter, hence may regulate the proteolytic processing of the amyloid precursor protein (APP). Plays a role in adipocyte differentiation. May be involved in myoblast differentiation into myotubes. Binds the consensus DNA sequence 5'-GGAAAAT-3'. In the presence of CREBBP, activates TNF transcription. Binds to PPARG gene promoter and regulates its activity. Binds to PPARG and REG3G gene promoters. The sequence is that of Nuclear factor of activated T-cells, cytoplasmic 4 (Nfatc4) from Rattus norvegicus (Rat).